The sequence spans 380 residues: Oocyte-specific homeobox protein 4 (380 aa).

5 disordered regions span residues 1 to 25, 43 to 95, 152 to 182, 234 to 303, and 339 to 380; these read MSKD…SFLV, VTPT…RKCR, KSSQ…FAAS, PRQK…CQTP, and TRSK…SSAY. Positions 43-53 are enriched in polar residues; it reads VTPTRPLQSSH. Residues 54–67 show a composition bias toward basic and acidic residues; that stretch reads SVHERDLHQKDSQE. The segment at residues 94-153 is a DNA-binding region (homeobox); it reads CRKERTVYSKEQKCLLQEHFHQCQNPDLEQRKALALLIGVTEYKIQTWFKNRRAKECRKS. A compositionally biased stretch (basic and acidic residues) spans 234-250; it reads PRQKCRELSREPGHLSS. Low complexity predominate over residues 260 to 271; the sequence is SSPSPAAGAESS. 2 stretches are compositionally biased toward polar residues: residues 278–302 and 351–380; these read LSLS…MCQT and NTVQ…SSAY.

The protein belongs to the paired homeobox family. Obox subfamily. Specifically expressed in early embryos.

The protein resides in the nucleus. Transcription factor required for zygotic genome activation (ZGA), a critical event in early embryonic development during which the developmental control passes from maternally provided mRNAs to the expression of the zygotic genome after fertilization. Cannot compensate for loss of other members of the Obox family, suggesting that its function differs from other Obox family members. May regulate expression of histone genes in embryonic stem cells. Also involved in completion of meiosis of oocytes during the meiosis-I/meiosis-II transition. Required to maintain the nuclear membrane of the germinal vesicle in oocytes. This Mus musculus (Mouse) protein is Oocyte-specific homeobox protein 4.